The sequence spans 108 residues: Insulin (108 aa).

The N-terminal stretch at 1–24 (MALWTRLLPLLALLALWAPAPAQA) is a signal peptide. 3 cysteine pairs are disulfide-bonded: Cys-31-Cys-94, Cys-43-Cys-107, and Cys-93-Cys-98. The propeptide at 57–85 (EAENPQAGAVELGGGLGGLQALALEGPPQ) is c peptide.

This sequence belongs to the insulin family. As to quaternary structure, heterodimer of a B chain and an A chain linked by two disulfide bonds.

It is found in the secreted. Its function is as follows. Insulin decreases blood glucose concentration. It increases cell permeability to monosaccharides, amino acids and fatty acids. It accelerates glycolysis, the pentose phosphate cycle, and glycogen synthesis in liver. This chain is Insulin (INS), found in Sus scrofa (Pig).